A 420-amino-acid polypeptide reads, in one-letter code: DNA repair protein NreA (420 aa).

A PIP motif motif is present at residues 413–420; it reads QTDIFDFA.

Belongs to the Nre family. Interacts with the DNA polymerase sliding clamp (PCNA) via the PIP (PCNA-interacting peptide) motif.

Functionally, involved in DNA damage repair. Works together with the UvrABC proteins in repairing DNA damage resulting from exposure to the DNA damaging agent mitomycin C (MMC). The chain is DNA repair protein NreA from Haloferax volcanii (strain ATCC 29605 / DSM 3757 / JCM 8879 / NBRC 14742 / NCIMB 2012 / VKM B-1768 / DS2) (Halobacterium volcanii).